The primary structure comprises 71 residues: Large ribosomal subunit protein bL31 (71 aa).

Cys-16, Cys-18, Cys-37, and Cys-40 together coordinate Zn(2+).

The protein belongs to the bacterial ribosomal protein bL31 family. Type A subfamily. As to quaternary structure, part of the 50S ribosomal subunit. Zn(2+) is required as a cofactor.

Functionally, binds the 23S rRNA. The protein is Large ribosomal subunit protein bL31 of Nitratidesulfovibrio vulgaris (strain DSM 19637 / Miyazaki F) (Desulfovibrio vulgaris).